Consider the following 300-residue polypeptide: Nuclear egress protein 1 (300 aa).

The CCCH-type zinc-finger motif lies at 90 to 217 (CLSLSGMGYY…YIVFPGKALH (128 aa)).

It belongs to the herpesviridae NEC1 protein family. As to quaternary structure, forms a heterohexameric complex with NEC2. Interacts with capsid vertex specific component 2/CVC2; this interaction directs the capsid to the host inner nuclear membrane to initiate budding. Phosphorylated at serine residues in the N-terminus. This phosphorylation regulates the localization within the inner nuclear membrane.

It localises to the host nucleus inner membrane. Functionally, plays an essential role in virion nuclear egress, the first step of virion release from infected cell. Within the host nucleus, NEC1 interacts with the newly formed capsid through the vertexes and directs it to the inner nuclear membrane by associating with NEC2. Induces the budding of the capsid at the inner nuclear membrane as well as its envelopment into the perinuclear space. There, the NEC1/NEC2 complex promotes the fusion of the enveloped capsid with the outer nuclear membrane and the subsequent release of the viral capsid into the cytoplasm where it will reach the secondary budding sites in the host Golgi or trans-Golgi network. This chain is Nuclear egress protein 1, found in Gallid herpesvirus 2 (strain Chicken/Md5/ATCC VR-987) (GaHV-2).